We begin with the raw amino-acid sequence, 274 residues long: Large ribosomal subunit protein uL2 (274 aa).

The disordered stretch occupies residues 223 to 274; that stretch reads VVMNPVDHPHGGGEGRTSGGRHPVSPWGVPTKGYKTRSNKRTDKYIVRRRNK.

It belongs to the universal ribosomal protein uL2 family. As to quaternary structure, part of the 50S ribosomal subunit. Forms a bridge to the 30S subunit in the 70S ribosome.

Its function is as follows. One of the primary rRNA binding proteins. Required for association of the 30S and 50S subunits to form the 70S ribosome, for tRNA binding and peptide bond formation. It has been suggested to have peptidyltransferase activity; this is somewhat controversial. Makes several contacts with the 16S rRNA in the 70S ribosome. This is Large ribosomal subunit protein uL2 from Vibrio cholerae serotype O1 (strain M66-2).